The primary structure comprises 133 residues: Large ribosomal subunit protein bL17 (133 aa).

Belongs to the bacterial ribosomal protein bL17 family. As to quaternary structure, part of the 50S ribosomal subunit. Contacts protein L32.

The protein is Large ribosomal subunit protein bL17 of Thermodesulfovibrio yellowstonii (strain ATCC 51303 / DSM 11347 / YP87).